A 513-amino-acid chain; its full sequence is Interferon alpha/beta receptor 2 (513 aa).

A signal peptide spans 1–21 (MRSRCTVSAVGLLSLCLVVSA). Over 22–242 (SLETITPSAF…GQESGLSESA (221 aa)) the chain is Extracellular. 2 disulfides stabilise this stretch: Cys-39/Cys-123 and Cys-85/Cys-93. Residues Asn-42, Asn-58, Asn-65, Asn-78, and Asn-84 are each glycosylated (N-linked (GlcNAc...) asparagine). Residues Asn-149, Asn-191, and Asn-195 are each glycosylated (N-linked (GlcNAc...) asparagine). A disulfide bridge connects residues Cys-210 and Cys-227. Residues 243–263 (IVGITTSCLVVMVFVSTIVML) form a helical membrane-spanning segment. Topologically, residues 264–513 (KRIGYICLKD…ADVGDGYIMR (250 aa)) are cytoplasmic. The segment at 334 to 402 (GYTMHGLTGK…DPTGPYERRK (69 aa)) is disordered. Position 335 is a phosphotyrosine (Tyr-335). Positions 344–354 (PLQQTSDTSAS) are enriched in polar residues. Over residues 377–389 (GAEPELPTEAGAG) the composition is skewed to low complexity. Position 403 is a phosphoserine (Ser-403). The segment at 421 to 444 (GDNIIFNVNLNSVFLRVLHDEDAS) is mediates interaction with STAT2 (and required for the recruitment of USP18). Ser-448 and Ser-465 each carry phosphoserine. Residues 458–513 (EGPQRTESDLRIAGGDRTQPPLPSLPSQDLWTEDGSSEKSDTSDSDADVGDGYIMR) form a disordered region. Tyr-510 is modified (phosphotyrosine).

This sequence belongs to the type II cytokine receptor family. Heterodimer with IFNAR1; forming the receptor for type I interferon. Interacts with the transcriptional factors STAT1 and STAT2. Interacts with JAK1. Interacts with USP18; indirectly via STAT2, it negatively regulates the assembly of the ternary interferon-IFNAR1-IFNAR2 complex and therefore type I interferon signaling. Post-translationally, phosphorylated on tyrosine residues upon interferon binding. Phosphorylation at Tyr-335 or Tyr-510 are sufficient to mediate interferon dependent activation of STAT1, STAT2 and STAT3 leading to antiproliferative effects on many different cell types. Widely expressed. Detected in liver, testis, kidney, salivary gland, thymus, brain, lung and placenta. Isoform 1, isoform 2 and isoform 3 are expressed in brain.

Its subcellular location is the cell membrane. It is found in the secreted. In terms of biological role, together with IFNAR1, forms the heterodimeric receptor for type I interferons (including interferons alpha, beta, epsilon, omega and kappa). Type I interferon binding activates the JAK-STAT signaling cascade, resulting in transcriptional activation or repression of interferon-regulated genes that encode the effectors of the interferon response. Mechanistically, type I interferon-binding brings the IFNAR1 and IFNAR2 subunits into close proximity with one another, driving their associated Janus kinases (JAKs) (TYK2 bound to IFNAR1 and JAK1 bound to IFNAR2) to cross-phosphorylate one another. The activated kinases phosphorylate specific tyrosine residues on the intracellular domains of IFNAR1 and IFNAR2, forming docking sites for the STAT transcription factors (STAT1, STAT2 and STAT). STAT proteins are then phosphorylated by the JAKs, promoting their translocation into the nucleus to regulate expression of interferon-regulated genes. May be potent inhibitors of type I IFN receptor activity. This Mus musculus (Mouse) protein is Interferon alpha/beta receptor 2 (Ifnar2).